A 719-amino-acid chain; its full sequence is Translation initiation factor IF-2 (719 aa).

A compositionally biased stretch (basic and acidic residues) spans 54-67; that stretch reads NKEETKPNVDEKPP. Disordered regions lie at residues 54–75 and 97–122; these read NKEE…LTDN and STKN…KRKN. The segment covering 109–122 has biased composition (basic residues); sequence KDKKKKNKKDKRKN. Positions 221-390 constitute a tr-type G domain; sequence HRSPVVTVMG…LLVSEMSELK (170 aa). Residues 230-237 are G1; the sequence is GHVDHGKT. 230–237 is a GTP binding site; it reads GHVDHGKT. Residues 255 to 259 are G2; it reads GITQH. A G3 region spans residues 276 to 279; sequence DTPG. Residues 276–280 and 330–333 each bind GTP; these read DTPGH and NKMD. Residues 330–333 are G4; sequence NKMD. Positions 366–368 are G5; that stretch reads SAR.

Belongs to the TRAFAC class translation factor GTPase superfamily. Classic translation factor GTPase family. IF-2 subfamily.

Its subcellular location is the cytoplasm. In terms of biological role, one of the essential components for the initiation of protein synthesis. Protects formylmethionyl-tRNA from spontaneous hydrolysis and promotes its binding to the 30S ribosomal subunits. Also involved in the hydrolysis of GTP during the formation of the 70S ribosomal complex. This Alkaliphilus oremlandii (strain OhILAs) (Clostridium oremlandii (strain OhILAs)) protein is Translation initiation factor IF-2.